The following is a 375-amino-acid chain: Peptide-N(4)-(N-acetyl-beta-glucosaminyl)asparagine amidase (375 aa).

Zn(2+)-binding residues include Cys-129, Cys-132, Cys-163, and Cys-166. Cys-189 acts as the Nucleophile in catalysis. Residues His-219 and Asp-236 contribute to the active site. Position 239 (Glu-239) interacts with substrate. The disordered stretch occupies residues 345–375 (KIEVSRTHNIPTGRQTGDAEWTKSRGEDGNE). Positions 364–375 (EWTKSRGEDGNE) are enriched in basic and acidic residues.

The protein belongs to the transglutaminase-like superfamily. PNGase family. The cofactor is Zn(2+).

It localises to the cytoplasm. The enzyme catalyses Hydrolysis of an N(4)-(acetyl-beta-D-glucosaminyl)asparagine residue in which the glucosamine residue may be further glycosylated, to yield a (substituted) N-acetyl-beta-D-glucosaminylamine and a peptide containing an aspartate residue.. Its function is as follows. Specifically deglycosylates the denatured form of N-linked glycoproteins in the cytoplasm and assists their proteasome-mediated degradation. Cleaves the beta-aspartyl-glucosamine (GlcNAc) of the glycan and the amide side chain of Asn, converting Asn to Asp. Prefers proteins containing high-mannose over those bearing complex type oligosaccharides. Can recognize misfolded proteins in the endoplasmic reticulum that are exported to the cytosol to be destroyed and deglycosylate them, while it has no activity toward native proteins. Deglycosylation is a prerequisite for subsequent proteasome-mediated degradation of some, but not all, misfolded glycoproteins. The polypeptide is Peptide-N(4)-(N-acetyl-beta-glucosaminyl)asparagine amidase (PNG1) (Debaryomyces hansenii (strain ATCC 36239 / CBS 767 / BCRC 21394 / JCM 1990 / NBRC 0083 / IGC 2968) (Yeast)).